A 37-amino-acid polypeptide reads, in one-letter code: Cytochrome b6-f complex subunit 5 (37 aa).

The chain crosses the membrane as a helical span at residues 5-25; it reads LLSGIVLGMIPITLAGLFVTA.

It belongs to the PetG family. The 4 large subunits of the cytochrome b6-f complex are cytochrome b6, subunit IV (17 kDa polypeptide, PetD), cytochrome f and the Rieske protein, while the 4 small subunits are PetG, PetL, PetM and PetN. The complex functions as a dimer.

The protein localises to the plastid. Its subcellular location is the chloroplast thylakoid membrane. Its function is as follows. Component of the cytochrome b6-f complex, which mediates electron transfer between photosystem II (PSII) and photosystem I (PSI), cyclic electron flow around PSI, and state transitions. PetG is required for either the stability or assembly of the cytochrome b6-f complex. The polypeptide is Cytochrome b6-f complex subunit 5 (Mesostigma viride (Green alga)).